Here is a 703-residue protein sequence, read N- to C-terminus: Elongation factor G 1 (703 aa).

Residues 8–290 enclose the tr-type G domain; it reads ERYRNIGISA…AVIDFLPSPV (283 aa). GTP is bound by residues 17–24, 88–92, and 142–145; these read AHIDAGKT, DTPGH, and NKMD.

This sequence belongs to the TRAFAC class translation factor GTPase superfamily. Classic translation factor GTPase family. EF-G/EF-2 subfamily.

It localises to the cytoplasm. Functionally, catalyzes the GTP-dependent ribosomal translocation step during translation elongation. During this step, the ribosome changes from the pre-translocational (PRE) to the post-translocational (POST) state as the newly formed A-site-bound peptidyl-tRNA and P-site-bound deacylated tRNA move to the P and E sites, respectively. Catalyzes the coordinated movement of the two tRNA molecules, the mRNA and conformational changes in the ribosome. The chain is Elongation factor G 1 from Ralstonia nicotianae (strain ATCC BAA-1114 / GMI1000) (Ralstonia solanacearum).